Here is a 31-residue protein sequence, read N- to C-terminus: Photosystem II reaction center protein T (31 aa).

A helical membrane pass occupies residues 3-23 (AFSYVLILTLALVTLFFAVAF).

Belongs to the PsbT family. In terms of assembly, PSII is composed of 1 copy each of membrane proteins PsbA, PsbB, PsbC, PsbD, PsbE, PsbF, PsbH, PsbI, PsbJ, PsbK, PsbL, PsbM, PsbT, PsbX, PsbY, Psb30/Ycf12, peripheral proteins PsbO, CyanoQ (PsbQ), PsbU, PsbV and a large number of cofactors. It forms dimeric complexes.

Its subcellular location is the cellular thylakoid membrane. Its function is as follows. Found at the monomer-monomer interface of the photosystem II (PS II) dimer, plays a role in assembly and dimerization of PSII. PSII is a light-driven water plastoquinone oxidoreductase, using light energy to abstract electrons from H(2)O, generating a proton gradient subsequently used for ATP formation. The polypeptide is Photosystem II reaction center protein T (Prochlorococcus marinus (strain NATL2A)).